Reading from the N-terminus, the 325-residue chain is Tartrate-resistant acid phosphatase type 5 (325 aa).

The N-terminal stretch at 1 to 21 is a signal peptide; it reads MDTWTLLLVLHTSLLLPWAEG. Residues Asn-116 and Asn-147 are each glycosylated (N-linked (GlcNAc...) asparagine).

Exists either as monomer or, after proteolytic processing, as a dimer of two chains linked by disulfide bond(s). The cofactor is Fe cation.

It is found in the lysosome. It catalyses the reaction a phosphate monoester + H2O = an alcohol + phosphate. The protein is Tartrate-resistant acid phosphatase type 5 (ACP5) of Oryctolagus cuniculus (Rabbit).